A 441-amino-acid polypeptide reads, in one-letter code: tRNA(Ile)-lysidine synthase (441 aa).

27 to 32 is an ATP binding site; the sequence is SGGVDS.

It belongs to the tRNA(Ile)-lysidine synthase family.

Its subcellular location is the cytoplasm. The enzyme catalyses cytidine(34) in tRNA(Ile2) + L-lysine + ATP = lysidine(34) in tRNA(Ile2) + AMP + diphosphate + H(+). Its function is as follows. Ligates lysine onto the cytidine present at position 34 of the AUA codon-specific tRNA(Ile) that contains the anticodon CAU, in an ATP-dependent manner. Cytidine is converted to lysidine, thus changing the amino acid specificity of the tRNA from methionine to isoleucine. The protein is tRNA(Ile)-lysidine synthase of Proteus mirabilis (strain HI4320).